Here is a 343-residue protein sequence, read N- to C-terminus: ATP-dependent 6-phosphofructokinase (343 aa).

ATP contacts are provided by residues G10 and 103–106 (GEGT). Residue E104 coordinates Mg(2+). Residues 126-128 (TID), R163, 170-172 (MGR), E223, R267, and 273-276 (HVQR) contribute to the substrate site. The Proton acceptor role is filled by D128.

Belongs to the phosphofructokinase type A (PFKA) family. Mixed-substrate PFK group III subfamily. Homodimer or homotetramer. It depends on Mg(2+) as a cofactor.

It localises to the cytoplasm. It carries out the reaction beta-D-fructose 6-phosphate + ATP = beta-D-fructose 1,6-bisphosphate + ADP + H(+). It participates in carbohydrate degradation; glycolysis; D-glyceraldehyde 3-phosphate and glycerone phosphate from D-glucose: step 3/4. Catalyzes the phosphorylation of D-fructose 6-phosphate to fructose 1,6-bisphosphate by ATP, the first committing step of glycolysis. The polypeptide is ATP-dependent 6-phosphofructokinase (Mycobacterium leprae (strain TN)).